A 135-amino-acid chain; its full sequence is Putative pre-16S rRNA nuclease (135 aa).

Belongs to the YqgF nuclease family.

The protein resides in the cytoplasm. Its function is as follows. Could be a nuclease involved in processing of the 5'-end of pre-16S rRNA. The chain is Putative pre-16S rRNA nuclease from Buchnera aphidicola subsp. Acyrthosiphon pisum (strain 5A).